Reading from the N-terminus, the 188-residue chain is Large ribosomal subunit protein eL18 (188 aa).

Positions 153 to 188 are disordered; sequence GKAPGTPHSHTKPYIRSKGRKFERARGRRASRGYKN. Composition is skewed to basic residues over residues 161–171 and 178–188; these read SHTKPYIRSKG and RGRRASRGYKN.

This sequence belongs to the eukaryotic ribosomal protein eL18 family. As to quaternary structure, component of the large ribosomal subunit.

It localises to the cytoplasm. The protein localises to the cytosol. The protein resides in the rough endoplasmic reticulum. Its function is as follows. Component of the large ribosomal subunit. The ribosome is a large ribonucleoprotein complex responsible for the synthesis of proteins in the cell. The protein is Large ribosomal subunit protein eL18 (rpl18) of Ictalurus punctatus (Channel catfish).